We begin with the raw amino-acid sequence, 787 residues long: Protein PAT1 homolog 2 (787 aa).

Disordered stretches follow at residues K94–D120, E134–P221, V338–F374, L411–Q445, and V765–G787. Polar residues predominate over residues G105–D120. A compositionally biased stretch (low complexity) spans S142 to S153. Composition is skewed to polar residues over residues L154 to S171, S180 to S198, and G208 to P221. S184 and S192 each carry phosphoserine. Residues H341–R353 show a composition bias toward basic residues. Polar residues-rich tracts occupy residues G355–Q373 and S436–Q445.

Functionally, activator of mRNA decapping. Involved in mRNA decay via decapping. The chain is Protein PAT1 homolog 2 from Arabidopsis thaliana (Mouse-ear cress).